The following is a 260-amino-acid chain: Ubiquinone/menaquinone biosynthesis C-methyltransferase UbiE (260 aa).

S-adenosyl-L-methionine contacts are provided by residues threonine 83, aspartate 104, and 132–133; that span reads NA.

This sequence belongs to the class I-like SAM-binding methyltransferase superfamily. MenG/UbiE family.

The enzyme catalyses a 2-demethylmenaquinol + S-adenosyl-L-methionine = a menaquinol + S-adenosyl-L-homocysteine + H(+). It carries out the reaction a 2-methoxy-6-(all-trans-polyprenyl)benzene-1,4-diol + S-adenosyl-L-methionine = a 5-methoxy-2-methyl-3-(all-trans-polyprenyl)benzene-1,4-diol + S-adenosyl-L-homocysteine + H(+). Its pathway is quinol/quinone metabolism; menaquinone biosynthesis; menaquinol from 1,4-dihydroxy-2-naphthoate: step 2/2. It functions in the pathway cofactor biosynthesis; ubiquinone biosynthesis. Functionally, methyltransferase required for the conversion of demethylmenaquinol (DMKH2) to menaquinol (MKH2) and the conversion of 2-polyprenyl-6-methoxy-1,4-benzoquinol (DDMQH2) to 2-polyprenyl-3-methyl-6-methoxy-1,4-benzoquinol (DMQH2). This Bartonella bacilliformis (strain ATCC 35685 / KC583 / Herrer 020/F12,63) protein is Ubiquinone/menaquinone biosynthesis C-methyltransferase UbiE.